A 79-amino-acid polypeptide reads, in one-letter code: Conotoxin ArMSGL-0123 (79 aa).

The first 20 residues, 1-20, serve as a signal peptide directing secretion; sequence MSRLGIMVLTLLLLVFIVTS. Positions 21-44 are excised as a propeptide; sequence HQDAGEKQATKRAAVNFRWRRSFT. Intrachain disulfides connect Cys52-Cys64, Cys56-Cys73, and Cys63-Cys77. Leu78 is subject to Leucine amide.

The protein belongs to the conotoxin O3 superfamily. As to expression, expressed by the venom duct.

Its subcellular location is the secreted. The sequence is that of Conotoxin ArMSGL-0123 from Conus arenatus (Sand-dusted cone).